The sequence spans 214 residues: MKIILLGAPGAGKGTQAQFMMNKFGIPQISTGDMFRAAIKEGTELGKQAKALMDEGKLVPDELTVALVKDRIAQPDCANGFLLDGFPRTIPQADALKDSGVKIDLVLEFDVADEVIVERMSGRRVHQPSGRTYHVVYNPPKVEGKDDVTGEDLIIRQDDKPETVLERLAIYHKQTKPLIAYYTAEAEAGNTRYERLDGTKPVEEVSAELAKILG.

10-15 (GAGKGT) contacts ATP. The interval 30 to 59 (STGDMFRAAIKEGTELGKQAKALMDEGKLV) is NMP. AMP-binding positions include Thr31, Arg36, 57-59 (KLV), 85-88 (GFPR), and Gln92. Positions 122-159 (GRRVHQPSGRTYHVVYNPPKVEGKDDVTGEDLIIRQDD) are LID. ATP contacts are provided by residues Arg123 and 132–133 (TY). Positions 156 and 167 each coordinate AMP. Lys200 is a binding site for ATP.

This sequence belongs to the adenylate kinase family. As to quaternary structure, monomer.

It localises to the cytoplasm. The catalysed reaction is AMP + ATP = 2 ADP. The protein operates within purine metabolism; AMP biosynthesis via salvage pathway; AMP from ADP: step 1/1. Functionally, catalyzes the reversible transfer of the terminal phosphate group between ATP and AMP. Plays an important role in cellular energy homeostasis and in adenine nucleotide metabolism. The polypeptide is Adenylate kinase (Actinobacillus pleuropneumoniae serotype 5b (strain L20)).